The primary structure comprises 279 residues: MHTMTPLLKKQQAGEKLVMLTAYDYPSAKLAEAGHVDLLLVGDSLGNVILGYDSTIAVTVDDMVHHAKAVRRGAPATFMVVDMPFASYHGSFDRTLEAAARIFQESGADALKLEGAGDILTTIRRLTEAGMPCVAHLGLTPQSVGVLEGFKVQGKSLAAAEQLIADSLAAEQAGAKMLVLECVPHPLAKRVQELLTIPVIGIGAGADVAGQVLVYHDILTYGVGRLPKFVKAYADWNTSGTEAIARYVEDVKNGTFPELAHSFLMDEELIGALYGGFKE.

2 residues coordinate Mg(2+): Asp43 and Asp82. 3-methyl-2-oxobutanoate is bound by residues 43-44, Asp82, and Lys112; that span reads DS. Position 114 (Glu114) interacts with Mg(2+). Glu181 (proton acceptor) is an active-site residue.

It belongs to the PanB family. As to quaternary structure, homodecamer; pentamer of dimers. Mg(2+) serves as cofactor.

The protein resides in the cytoplasm. The catalysed reaction is 3-methyl-2-oxobutanoate + (6R)-5,10-methylene-5,6,7,8-tetrahydrofolate + H2O = 2-dehydropantoate + (6S)-5,6,7,8-tetrahydrofolate. The protein operates within cofactor biosynthesis; (R)-pantothenate biosynthesis; (R)-pantoate from 3-methyl-2-oxobutanoate: step 1/2. Catalyzes the reversible reaction in which hydroxymethyl group from 5,10-methylenetetrahydrofolate is transferred onto alpha-ketoisovalerate to form ketopantoate. This is 3-methyl-2-oxobutanoate hydroxymethyltransferase from Exiguobacterium sibiricum (strain DSM 17290 / CCUG 55495 / CIP 109462 / JCM 13490 / 255-15).